The chain runs to 420 residues: UDP-N-acetylglucosamine 1-carboxyvinyltransferase (420 aa).

22–23 (KN) provides a ligand contact to phosphoenolpyruvate. R95 serves as a coordination point for UDP-N-acetyl-alpha-D-glucosamine. The Proton donor role is filled by C119. C119 is modified (2-(S-cysteinyl)pyruvic acid O-phosphothioketal). UDP-N-acetyl-alpha-D-glucosamine contacts are provided by residues 124 to 128 (RPIDQ), D307, and I329.

Belongs to the EPSP synthase family. MurA subfamily.

The protein localises to the cytoplasm. It carries out the reaction phosphoenolpyruvate + UDP-N-acetyl-alpha-D-glucosamine = UDP-N-acetyl-3-O-(1-carboxyvinyl)-alpha-D-glucosamine + phosphate. Its pathway is cell wall biogenesis; peptidoglycan biosynthesis. Its function is as follows. Cell wall formation. Adds enolpyruvyl to UDP-N-acetylglucosamine. This is UDP-N-acetylglucosamine 1-carboxyvinyltransferase from Myxococcus xanthus (strain DK1622).